The following is a 153-amino-acid chain: Small ribosomal subunit protein uS13 (153 aa).

This sequence belongs to the universal ribosomal protein uS13 family.

Its subcellular location is the cytoplasm. In terms of biological role, located at the top of the head of the 40S subunit, it contacts several helices of the 18S rRNA. In Chlamydomonas reinhardtii (Chlamydomonas smithii), this protein is Small ribosomal subunit protein uS13 (RPS18).